The chain runs to 436 residues: Adenylyltransferase and sulfurtransferase UBA4 (436 aa).

ATP contacts are provided by residues G74, D95, 102 to 106 (SNLHR), K119, and 163 to 164 (DT). Residues C205 and C208 each coordinate Zn(2+). The active-site Glycyl thioester intermediate; for adenylyltransferase activity is the C222. Zn(2+) is bound by residues C283 and C286. Positions 335 to 434 (NEKDHILIDV…YIDEEDHSYP (100 aa)) constitute a Rhodanese domain. C393 functions as the Cysteine persulfide intermediate; for sulfurtransferase activity in the catalytic mechanism.

It in the N-terminal section; belongs to the HesA/MoeB/ThiF family. UBA4 subfamily. Zn(2+) serves as cofactor.

The protein localises to the cytoplasm. It is found in the cytosol. It functions in the pathway tRNA modification; 5-methoxycarbonylmethyl-2-thiouridine-tRNA biosynthesis. Plays a central role in 2-thiolation of mcm(5)S(2)U at tRNA wobble positions of cytosolic tRNA(Lys), tRNA(Glu) and tRNA(Gln). Acts by mediating the C-terminal thiocarboxylation of sulfur carrier URM1. Its N-terminus first activates URM1 as acyl-adenylate (-COAMP), then the persulfide sulfur on the catalytic cysteine is transferred to URM1 to form thiocarboxylation (-COSH) of its C-terminus. The reaction probably involves hydrogen sulfide that is generated from the persulfide intermediate and that acts as a nucleophile towards URM1. Subsequently, a transient disulfide bond is formed. Does not use thiosulfate as sulfur donor; NFS1 probably acting as a sulfur donor for thiocarboxylation reactions. Prior mcm(5) tRNA modification by the elongator complex is required for 2-thiolation. May also be involved in protein urmylation. The protein is Adenylyltransferase and sulfurtransferase UBA4 of Vanderwaltozyma polyspora (strain ATCC 22028 / DSM 70294 / BCRC 21397 / CBS 2163 / NBRC 10782 / NRRL Y-8283 / UCD 57-17) (Kluyveromyces polysporus).